Reading from the N-terminus, the 237-residue chain is Protein FEV (237 aa).

A DNA-binding region (ETS) is located at residues 47–127 (IQLWQFLLEL…HGKRYAYRFD (81 aa)). Residues 129–237 (QGLAQACQPP…AASHLGGHYH (109 aa)) form a may mediate active transcriptional repression region.

Belongs to the ETS family. As to expression, expressed in central serotonergic neurons.

It localises to the nucleus. Functions as a transcriptional regulator. May function as a transcriptional repressor. Functions in the differentiation and the maintenance of the central serotonergic neurons. May play a role in cell growth. The chain is Protein FEV (Fev) from Mus musculus (Mouse).